A 528-amino-acid polypeptide reads, in one-letter code: Chaperonin GroEL, chloroplastic (528 aa).

Residues 29-32 (TLGP), 86-90 (DGTTT), glycine 414, and aspartate 496 each bind ATP.

The protein belongs to the chaperonin (HSP60) family. In terms of assembly, forms a cylinder of 14 subunits composed of two heptameric rings stacked back-to-back. Interacts with the co-chaperonin GroES.

It localises to the plastid. The protein resides in the chloroplast. It catalyses the reaction ATP + H2O + a folded polypeptide = ADP + phosphate + an unfolded polypeptide.. Its function is as follows. Together with its co-chaperonin GroES, plays an essential role in assisting protein folding. The GroEL-GroES system forms a nano-cage that allows encapsulation of the non-native substrate proteins and provides a physical environment optimized to promote and accelerate protein folding. This chain is Chaperonin GroEL, chloroplastic, found in Porphyra purpurea (Red seaweed).